A 196-amino-acid chain; its full sequence is Bcl-2-like protein 11 (196 aa).

Residues 1–68 form a disordered region; that stretch reads MAKQPSDVNS…PLAPPASPGP (68 aa). Residues 34-43 show a composition bias toward polar residues; it reads TSLQTESQGN. A Phosphoserine; by MAPK modification is found at serine 65. Phosphoserine is present on residues serine 73, serine 83, and serine 90. The segment at 90–114 is disordered; that stretch reads SGYFSFDTDRSPAPMSCDKSTQTPS. A BH3 motif is present at residues 146–160; the sequence is IAQELRRIGDEFNET.

This sequence belongs to the Bcl-2 family. Forms heterodimers with a number of antiapoptotic Bcl-2 proteins, including MCL1, BCL2, BCL2L1 isoform Bcl-X(L), BCL2A1/BFL-1, and BCL2L2/BCLW. Does not heterodimerize with proapoptotic proteins such as BAD, BOK or BAK. Identified in a complex containing BCL2L11, DYNLL1 and BCL2L1 isoform Bcl-X(L); BH3 integrity is required for BCL2L1-binding. Interacts with YWHAZ. When phosphorylated, interacts with TRIM2; this interaction is associated with ubiquitination and degradation. Interacts (via BH3) with MCL1; this interaction may sequester BCL2L11 and prevent its pro-apoptotic activity. When phosphorylated, isoform BimEL interacts with USP27X; this interaction leads to BCL2L11 deubiquitination and stabilization. Interacts with GIMAP5. Interacts with BCL2L10/BCL-B. Post-translationally, phosphorylation at Ser-65 by MAPK1/MAPK3 leads interaction with TRIM2 and ubiquitination, followed by proteasomal degradation. Deubiquitination catalyzed by USP27X stabilizes the protein. In terms of processing, ubiquitination by TRIM2 following phosphorylation by MAPK1/MAPK3 leads to proteasomal degradation. Conversely, deubiquitination catalyzed by USP27X stabilizes the protein. As to expression, widely expressed.

The protein resides in the membrane. The protein localises to the mitochondrion. In terms of biological role, induces apoptosis and anoikis. The chain is Bcl-2-like protein 11 (Bcl2l11) from Rattus norvegicus (Rat).